The chain runs to 476 residues: Transcription factor Sox-9-B (476 aa).

Disordered stretches follow at residues 1–67 (MNLL…TEDE), 157–197 (EAER…EQTH), and 209–274 (ADSP…FRDV). Low complexity predominate over residues 30–41 (SAGSPCPSGSGS). The segment covering 42–52 (DTENTRPQENT) has biased composition (polar residues). Composition is skewed to basic and acidic residues over residues 56-67 (GDQEMKKETEDE) and 157-174 (EAER…DYKY). A Glycyl lysine isopeptide (Lys-Gly) (interchain with G-Cter in SUMO) cross-link involves residue K61. Positions 105 to 173 (VKRPMNAFMV…QHKKDHPDYK (69 aa)) form a DNA-binding region, HMG box. The segment covering 211 to 220 (SPHSTSSMSE) has biased composition (polar residues). Short sequence motifs (9aaTAD) lie at residues 276–285 (IGELSSEVIS) and 291–299 (DVNEFDQYL). The disordered stretch occupies residues 318 to 383 (YGISSTPSAT…SDQQQQHSPQ (66 aa)). Residues 319 to 344 (GISSTPSATTGAGSAWMSKQQQQPQQ) are compositionally biased toward low complexity. Polar residues predominate over residues 345 to 360 (HSLSTINSEQSQSQQR). K364 is covalently cross-linked (Glycyl lysine isopeptide (Lys-Gly) (interchain with G-Cter in SUMO)). A compositionally biased stretch (low complexity) spans 369-383 (SPSHYSDQQQQHSPQ). A 9aaTAD 3 motif is present at residues 427–435 (SGLYSNFTY). The tract at residues 443 to 476 (MYTPIADTTGVPSIPQTHSPQHWEQPVYTQLTRP) is disordered. Over residues 452–476 (GVPSIPQTHSPQHWEQPVYTQLTRP) the composition is skewed to polar residues.

In terms of assembly, interacts with the sumoylation factors ube2i/ubc9 and sumo1. Sumoylated. Lys-364 is the major site of sumoylation, although sumoylation at Lys-61 also occurs. Sumoylation plays a key role in regulating formation of the neural crest and otic placode.

The protein resides in the nucleus. Its subcellular location is the cytoplasm. Functionally, transcription factor that plays a key role in chondrocytes differentiation and skeletal development. Specifically binds the 5'-ACAAAG-3' DNA motif present in enhancers and super-enhancers and promotes expression of genes important for chondrogenesis, including COL2A1. Plays a central role in successive steps of chondrocyte differentiation. Absolutely required for precartilaginous condensation, the first step in chondrogenesis during which skeletal progenitors differentiate into prechondrocytes. Together with SOX5 and SOX6, required for overt chondrogenesis when condensed prechondrocytes differentiate into early stage chondrocytes, the second step in chondrogenesis. Later, required to direct hypertrophic maturation and block osteoblast differentiation of growth plate chondrocytes: maintains chondrocyte columnar proliferation, delays prehypertrophy and then prevents osteoblastic differentiation of chondrocytes. Also required for chondrocyte hypertrophy, both indirectly, by keeping the lineage fate of chondrocytes, and directly, by remaining present in upper hypertrophic cells. Low lipid levels are the main nutritional determinant for chondrogenic commitment of skeletal progenitor cells: when lipids levels are low, FOXO transcription factors promote expression of SOX9, which induces chondrogenic commitment and suppresses fatty acid oxidation. In addition to cartilage development, also acts as a regulator of proliferation and differentiation in epithelial stem/progenitor cells. The sequence is that of Transcription factor Sox-9-B (sox9-b) from Xenopus laevis (African clawed frog).